Here is a 227-residue protein sequence, read N- to C-terminus: MAHAAQVGLQDATSPIMEELITFHDHALMIIFLICFLVLYALFLTLTTKLTNTNISDAQEMETVWTILPAIILVLIALPSLRILYMTDEVNDPSLTIKSIGHQWYWTYEYTDYGGLIFNSYMLPPLFLEPGDLRLLDVDNRVVLPIEAPIRMMITSQDVLHSWAVPTLGLKTDAIPGRLNQTTFTATRPGVYYGQCSEICGANHSFMPIVLELIPLKIFEMGPVFTL.

Residues 1 to 14 (MAHAAQVGLQDATS) lie on the Mitochondrial intermembrane side of the membrane. Residues 15-45 (PIMEELITFHDHALMIIFLICFLVLYALFLT) form a helical membrane-spanning segment. Residues 46–59 (LTTKLTNTNISDAQ) lie on the Mitochondrial matrix side of the membrane. A helical transmembrane segment spans residues 60-87 (EMETVWTILPAIILVLIALPSLRILYMT). At 88–227 (DEVNDPSLTI…IFEMGPVFTL (140 aa)) the chain is on the mitochondrial intermembrane side. His161, Cys196, Glu198, Cys200, His204, and Met207 together coordinate Cu cation. Position 198 (Glu198) interacts with Mg(2+).

This sequence belongs to the cytochrome c oxidase subunit 2 family. Component of the cytochrome c oxidase (complex IV, CIV), a multisubunit enzyme composed of 14 subunits. The complex is composed of a catalytic core of 3 subunits MT-CO1, MT-CO2 and MT-CO3, encoded in the mitochondrial DNA, and 11 supernumerary subunits COX4I1 (or COX4I2), COX5A, COX5B, COX6A1 (or COX6A2), COX6B1 (or COX6B2), COX6C, COX7A2 (or COX7A1), COX7B, COX7C, COX8A and NDUFA4, which are encoded in the nuclear genome. The complex exists as a monomer or a dimer and forms supercomplexes (SCs) in the inner mitochondrial membrane with NADH-ubiquinone oxidoreductase (complex I, CI) and ubiquinol-cytochrome c oxidoreductase (cytochrome b-c1 complex, complex III, CIII), resulting in different assemblies (supercomplex SCI(1)III(2)IV(1) and megacomplex MCI(2)III(2)IV(2)). Found in a complex with TMEM177, COA6, COX18, COX20, SCO1 and SCO2. Interacts with TMEM177 in a COX20-dependent manner. Interacts with COX20. Interacts with COX16. The cofactor is Cu cation.

The protein resides in the mitochondrion inner membrane. It carries out the reaction 4 Fe(II)-[cytochrome c] + O2 + 8 H(+)(in) = 4 Fe(III)-[cytochrome c] + 2 H2O + 4 H(+)(out). Functionally, component of the cytochrome c oxidase, the last enzyme in the mitochondrial electron transport chain which drives oxidative phosphorylation. The respiratory chain contains 3 multisubunit complexes succinate dehydrogenase (complex II, CII), ubiquinol-cytochrome c oxidoreductase (cytochrome b-c1 complex, complex III, CIII) and cytochrome c oxidase (complex IV, CIV), that cooperate to transfer electrons derived from NADH and succinate to molecular oxygen, creating an electrochemical gradient over the inner membrane that drives transmembrane transport and the ATP synthase. Cytochrome c oxidase is the component of the respiratory chain that catalyzes the reduction of oxygen to water. Electrons originating from reduced cytochrome c in the intermembrane space (IMS) are transferred via the dinuclear copper A center (CU(A)) of subunit 2 and heme A of subunit 1 to the active site in subunit 1, a binuclear center (BNC) formed by heme A3 and copper B (CU(B)). The BNC reduces molecular oxygen to 2 water molecules using 4 electrons from cytochrome c in the IMS and 4 protons from the mitochondrial matrix. In Homo sapiens (Human), this protein is Cytochrome c oxidase subunit 2 (MT-CO2).